The sequence spans 420 residues: UDP-glucuronic acid decarboxylase 1 (420 aa).

The residue at position 1 (Met-1) is an N-acetylmethionine. The Cytoplasmic portion of the chain corresponds to 1–19 (MVSKALLRLVSAVNRRRMK). A helical; Signal-anchor for type II membrane protein membrane pass occupies residues 20-40 (LLLGIALLAYVASVWGNFVNM). Over 41–420 (RSIQENGELK…RIKKGRTRHN (380 aa)) the chain is Lumenal. At Thr-94 the chain carries Phosphothreonine. NAD(+)-binding residues include Gly-98, Phe-99, Val-100, Asp-119, Asn-120, Phe-122, Thr-123, Gly-124, Asp-144, and Val-145. UDP-alpha-D-glucuronate-binding residues include Leu-149 and Tyr-150. NAD(+)-binding residues include Leu-159 and Ser-161. Position 177 (Lys-177) interacts with UDP-alpha-D-glucuronate. NAD(+) is bound at residue Thr-178. UDP-alpha-D-glucuronate-binding residues include Asn-185, Gly-188, Lys-191, and Arg-192. Residues Ala-200, Tyr-231, and Lys-235 each contribute to the NAD(+) site. Tyr-231 serves as the catalytic Proton acceptor. Residues Tyr-245, Gln-248, and Glu-249 each coordinate UDP-alpha-D-glucuronate. Residues Thr-261, His-267, and Arg-272 each coordinate NAD(+). N-linked (GlcNAc...) asparagine glycosylation occurs at Asn-316.

This sequence belongs to the NAD(P)-dependent epimerase/dehydratase family. UDP-glucuronic acid decarboxylase subfamily. In terms of assembly, homodimer and homotetramer. Interacts with AKT1. It depends on NAD(+) as a cofactor.

It localises to the golgi apparatus. The protein resides in the golgi stack membrane. It catalyses the reaction UDP-alpha-D-glucuronate + H(+) = UDP-alpha-D-xylose + CO2. Its pathway is nucleotide-sugar biosynthesis; UDP-alpha-D-xylose biosynthesis; UDP-alpha-D-xylose from UDP-alpha-D-glucuronate: step 1/1. Functionally, catalyzes the NAD-dependent decarboxylation of UDP-glucuronic acid to UDP-xylose. Necessary for the biosynthesis of the core tetrasaccharide in glycosaminoglycan biosynthesis. The chain is UDP-glucuronic acid decarboxylase 1 (UXS1) from Pongo abelii (Sumatran orangutan).